Here is an 822-residue protein sequence, read N- to C-terminus: DNA gyrase subunit A (822 aa).

A Topo IIA-type catalytic domain is found at 32–497; the sequence is LPDVRDGLKP…QVLSLEDEDL (466 aa). Y120 (O-(5'-phospho-DNA)-tyrosine intermediate) is an active-site residue. The GyrA-box signature appears at 524–530; it reads QKRGGRG.

The protein belongs to the type II topoisomerase GyrA/ParC subunit family. In terms of assembly, heterotetramer, composed of two GyrA and two GyrB chains. In the heterotetramer, GyrA contains the active site tyrosine that forms a transient covalent intermediate with DNA, while GyrB binds cofactors and catalyzes ATP hydrolysis.

The protein localises to the cytoplasm. It catalyses the reaction ATP-dependent breakage, passage and rejoining of double-stranded DNA.. A type II topoisomerase that negatively supercoils closed circular double-stranded (ds) DNA in an ATP-dependent manner to modulate DNA topology and maintain chromosomes in an underwound state. Negative supercoiling favors strand separation, and DNA replication, transcription, recombination and repair, all of which involve strand separation. Also able to catalyze the interconversion of other topological isomers of dsDNA rings, including catenanes and knotted rings. Type II topoisomerases break and join 2 DNA strands simultaneously in an ATP-dependent manner. In Streptococcus pneumoniae (strain ATCC BAA-255 / R6), this protein is DNA gyrase subunit A.